Consider the following 126-residue polypeptide: MSAPNPKAFPLADATLSQQILDVVQQASNMRQLKKGANEATKTLNRGISEFIIMAADCEPIEILLHLPLLCEDKNVPYVFVPSRTALGRACGVSRPVIAASITTNDASAIKSQIYAVKDKIETLLI.

It belongs to the eukaryotic ribosomal protein eL8 family. In terms of assembly, component of the U3 snoRNP particle. Binds to the C'/D and B/C motifs in U3 snoRNA. Component of the 25S U4/U6.U5 tri-snRNP particle, a subcomplex of the spliceosome. Binds to the 5' stem-loop of U4 snRNA.

It localises to the nucleus. The protein localises to the nucleolus. In terms of biological role, common component of the spliceosome and rRNA processing machinery. In association with the spliceosomal U4/U6.U5 tri-snRNP particle, required for splicing of pre-mRNA. In association with box C/D snoRNPs, required for processing of pre-ribosomal RNA (rRNA) and site-specific 2'-O-methylation of substrate RNAs. Essential for the accumulation and stability of U4 snRNA, U6 snRNA, and box C/D snoRNAs. This Kluyveromyces lactis (strain ATCC 8585 / CBS 2359 / DSM 70799 / NBRC 1267 / NRRL Y-1140 / WM37) (Yeast) protein is 13 kDa ribonucleoprotein-associated protein (SNU13).